We begin with the raw amino-acid sequence, 472 residues long: UDP-N-acetylmuramate--L-alanine ligase (472 aa).

122 to 128 (GSHGKTT) lines the ATP pocket.

It belongs to the MurCDEF family.

It is found in the cytoplasm. It catalyses the reaction UDP-N-acetyl-alpha-D-muramate + L-alanine + ATP = UDP-N-acetyl-alpha-D-muramoyl-L-alanine + ADP + phosphate + H(+). Its pathway is cell wall biogenesis; peptidoglycan biosynthesis. Functionally, cell wall formation. The sequence is that of UDP-N-acetylmuramate--L-alanine ligase from Prochlorococcus marinus (strain SARG / CCMP1375 / SS120).